The primary structure comprises 1096 residues: Cation-transporting ATPase 5 (1096 aa).

Residues 1 to 19 lie on the Cytoplasmic side of the membrane; sequence MDSIELKQLVPENDSEPGT. Residues 20–41 form a helical membrane-spanning segment; the sequence is PRQLLFQHYDISNEETIGIKPF. Over 42–47 the chain is Lumenal; it reads KSIPAK. A helical transmembrane segment spans residues 48–70; sequence VYILRVTEILTLGLLHLILTWLP. At 71 to 193 the chain is on the cytoplasmic side; it reads EFRLKWIEAP…LVSTKKSIVT (123 aa). Residues 194–216 form a helical membrane-spanning segment; it reads ILLNEVLHPFYLFQAVSVLIWLC. Residues 217-220 are Lumenal-facing; it reads DSFV. A helical membrane pass occupies residues 221-238; sequence FYSCCIVFISSYSIFLSV. The Cytoplasmic portion of the chain corresponds to 239–391; it reads KESKESENRI…NLRPSQLYLD (153 aa). The helical transmembrane segment at 392–412 threads the bilayer; that stretch reads SMSFLKTMAILSFVSIVFIAI. At 413 to 425 the chain is on the lumenal side; sequence YLNLYNASFGHVV. Residues 426-447 traverse the membrane as a helical segment; it reads LRSLDVLTILVPPALPATLSVG. Over 448–895 the chain is Cytoplasmic; that stretch reads IANSIARLSR…SLILSHRCFQ (448 aa). Aspartate 480 (4-aspartylphosphate intermediate) is an active-site residue. Mg(2+) is bound by residues aspartate 838 and aspartate 842. The chain crosses the membrane as a helical span at residues 896 to 915; that stretch reads YMVLCAIVQFSGVFFLYLKN. Topologically, residues 916–922 are lumenal; that stretch reads YNFNDNQ. Residues 923–940 form a helical membrane-spanning segment; sequence FLFMDLLIIFPLSAAMSY. Over 941 to 958 the chain is Cytoplasmic; that stretch reads FDPAQNLTSNRPNSTLFG. A helical transmembrane segment spans residues 959–982; sequence KGRVKDLGIQSVLIWLSHGLLTLI. At 983 to 1003 the chain is on the lumenal side; it reads LHELNWVELPEWQLEKSNTKN. Residues 1004-1026 traverse the membrane as a helical segment; it reads VLVTSIFLLSSLQYLGICIGINQ. The Cytoplasmic portion of the chain corresponds to 1027 to 1040; that stretch reads SSEFLSPIWKKKTY. The chain crosses the membrane as a helical span at residues 1041-1060; the sequence is VCLCTTIGLCNIYLCFANEN. Topologically, residues 1061–1075 are lumenal; it reads HIISRCLQITRLPTL. A helical transmembrane segment spans residues 1076-1096; that stretch reads YRFIILFMGVISCCLTSILNM.

The protein belongs to the cation transport ATPase (P-type) (TC 3.A.3) family. Type V subfamily.

It is found in the endoplasmic reticulum membrane. The protein resides in the golgi apparatus membrane. It catalyses the reaction ATP + H2O = ADP + phosphate + H(+). Functionally, plays a role in regulating calcium and manganese homeostasis responsible for cell cycle progression. The polypeptide is Cation-transporting ATPase 5 (cta5) (Schizosaccharomyces pombe (strain 972 / ATCC 24843) (Fission yeast)).